The sequence spans 238 residues: Ribonuclease PH (238 aa).

Phosphate-binding positions include R86 and 124–126; that span reads GTR.

Belongs to the RNase PH family. Homodimer. Has a tendency to aggregate into multimers. The cofactor is Mg(2+).

The enzyme catalyses tRNA(n+1) + phosphate = tRNA(n) + a ribonucleoside 5'-diphosphate. Its function is as follows. Phosphorolytic exoribonuclease that plays an important role in tRNA 3'-end maturation; has no activity on a tRNA precursor with a 3'-terminal phosphate group. In vitro is freely reversible, adds nucleotides to the ends of RNA molecules by using nucleoside diphosphates as substrates, but this may not be physiologically important. Probably plays a role in initiation of 16S rRNA degradation (leading to ribosome degradation) during starvation. This chain is Ribonuclease PH, found in Escherichia coli (strain K12 / MC4100 / BW2952).